Reading from the N-terminus, the 141-residue chain is Large ribosomal subunit protein uL11 (141 aa).

This sequence belongs to the universal ribosomal protein uL11 family. In terms of assembly, part of the ribosomal stalk of the 50S ribosomal subunit. Interacts with L10 and the large rRNA to form the base of the stalk. L10 forms an elongated spine to which L12 dimers bind in a sequential fashion forming a multimeric L10(L12)X complex. One or more lysine residues are methylated.

Forms part of the ribosomal stalk which helps the ribosome interact with GTP-bound translation factors. The sequence is that of Large ribosomal subunit protein uL11 from Syntrophomonas wolfei subsp. wolfei (strain DSM 2245B / Goettingen).